Here is a 155-residue protein sequence, read N- to C-terminus: Ribonuclease H (155 aa).

Positions 4–145 constitute an RNase H type-1 domain; sequence QQKVVEIYTD…ADALARKAIA (142 aa). 4 residues coordinate Mg(2+): Asp-13, Glu-51, Asp-73, and Asp-137.

The protein belongs to the RNase H family. As to quaternary structure, monomer. Mg(2+) serves as cofactor.

The protein localises to the cytoplasm. The catalysed reaction is Endonucleolytic cleavage to 5'-phosphomonoester.. In terms of biological role, endonuclease that specifically degrades the RNA of RNA-DNA hybrids. The chain is Ribonuclease H from Bartonella tribocorum (strain CIP 105476 / IBS 506).